A 241-amino-acid chain; its full sequence is Octanoyltransferase (241 aa).

The BPL/LPL catalytic domain occupies 43–228 (ADTPDEIWLV…RLTANLDGSP (186 aa)). Residues 83–90 (RGGQITYH), 159–161 (ALG), and 172–174 (GVS) each bind substrate. Cys190 (acyl-thioester intermediate) is an active-site residue.

Belongs to the LipB family.

It is found in the cytoplasm. It catalyses the reaction octanoyl-[ACP] + L-lysyl-[protein] = N(6)-octanoyl-L-lysyl-[protein] + holo-[ACP] + H(+). It participates in protein modification; protein lipoylation via endogenous pathway; protein N(6)-(lipoyl)lysine from octanoyl-[acyl-carrier-protein]: step 1/2. Functionally, catalyzes the transfer of endogenously produced octanoic acid from octanoyl-acyl-carrier-protein onto the lipoyl domains of lipoate-dependent enzymes. Lipoyl-ACP can also act as a substrate although octanoyl-ACP is likely to be the physiological substrate. In Paraburkholderia phytofirmans (strain DSM 17436 / LMG 22146 / PsJN) (Burkholderia phytofirmans), this protein is Octanoyltransferase.